The chain runs to 525 residues: Neuropilin and tolloid-like protein 2 (525 aa).

A signal peptide spans 1-22; it reads MALEQLCAVLKVLLITVLVVEG. The Extracellular portion of the chain corresponds to 23–347; it reads IAVAQKTQDG…GLFEQITKTH (325 aa). Disulfide bonds link cysteine 45/cysteine 72, cysteine 100/cysteine 122, cysteine 177/cysteine 207, cysteine 234/cysteine 256, cysteine 297/cysteine 309, cysteine 304/cysteine 322, and cysteine 316/cysteine 331. CUB domains lie at 45–159 and 177–292; these read CGIW…YSFI and CQFE…FTSF. The LDL-receptor class A domain occupies 296 to 332; it reads PCTSSTFFCHSNMCINNSLVCNGVQNCAYPWDENHCK. N-linked (GlcNAc...) asparagine glycosylation is present at asparagine 311. A helical membrane pass occupies residues 348 to 368; it reads GTIIGITSGIVLVLLIISILV. Over 369 to 525 the chain is Cytoplasmic; it reads QVKQPRKKVM…SAQASISIDF (157 aa). The residue at position 409 (serine 409) is a Phosphoserine.

In terms of assembly, interacts with GRIK2 and GRIK3, but neither with AMPA-nor with NMDA-sensitive glutamate receptors. Post-translationally, N-glycosylated. Expressed in brain tissues, including cerebellar granule cells (at protein level).

The protein localises to the cell membrane. Its function is as follows. Accessory subunit of neuronal kainate-sensitive glutamate receptors, GRIK2 and GRIK3. Increases kainate-receptor channel activity, slowing the decay kinetics of the receptors, without affecting their expression at the cell surface, and increasing the open probability of the receptor channels. Modulates the agonist sensitivity of kainate receptors. Slows the decay of kainate receptor-mediated excitatory postsynaptic currents (EPSCs), thus directly influencing synaptic transmission. The protein is Neuropilin and tolloid-like protein 2 (Neto2) of Mus musculus (Mouse).